The chain runs to 397 residues: Adenylosuccinate synthetase (397 aa).

GTP is bound by residues 11–17 (GDEGKGK) and 39–41 (GHT). The active-site Proton acceptor is the D12. 2 residues coordinate Mg(2+): D12 and G39. Residues 12 to 15 (DEGK), 37 to 40 (NAGH), T125, R139, Q212, T227, and R290 each bind IMP. H40 functions as the Proton donor in the catalytic mechanism. Position 286-292 (286-292 (STTGRPR)) interacts with substrate. GTP is bound by residues R292, 318-320 (KAD), and 386-388 (STG).

It belongs to the adenylosuccinate synthetase family. Homodimer. It depends on Mg(2+) as a cofactor.

The protein localises to the cytoplasm. It catalyses the reaction IMP + L-aspartate + GTP = N(6)-(1,2-dicarboxyethyl)-AMP + GDP + phosphate + 2 H(+). The protein operates within purine metabolism; AMP biosynthesis via de novo pathway; AMP from IMP: step 1/2. In terms of biological role, plays an important role in the de novo pathway of purine nucleotide biosynthesis. Catalyzes the first committed step in the biosynthesis of AMP from IMP. The polypeptide is Adenylosuccinate synthetase (Thermotoga maritima (strain ATCC 43589 / DSM 3109 / JCM 10099 / NBRC 100826 / MSB8)).